The chain runs to 89 residues: Large ribosomal subunit protein bL31B (89 aa).

The protein belongs to the bacterial ribosomal protein bL31 family. Type B subfamily. Part of the 50S ribosomal subunit.

The sequence is that of Large ribosomal subunit protein bL31B from Enterococcus faecalis (strain ATCC 700802 / V583).